The following is a 376-amino-acid chain: Alanine racemase (376 aa).

The active-site Proton acceptor; specific for D-alanine is Lys36. At Lys36 the chain carries N6-(pyridoxal phosphate)lysine. Arg134 contributes to the substrate binding site. Residue Tyr266 is the Proton acceptor; specific for L-alanine of the active site. Position 314 (Met314) interacts with substrate.

The protein belongs to the alanine racemase family. It depends on pyridoxal 5'-phosphate as a cofactor.

The catalysed reaction is L-alanine = D-alanine. It participates in amino-acid biosynthesis; D-alanine biosynthesis; D-alanine from L-alanine: step 1/1. Catalyzes the interconversion of L-alanine and D-alanine. May also act on other amino acids. In Nitratidesulfovibrio vulgaris (strain ATCC 29579 / DSM 644 / CCUG 34227 / NCIMB 8303 / VKM B-1760 / Hildenborough) (Desulfovibrio vulgaris), this protein is Alanine racemase (alr).